The following is a 56-amino-acid chain: Large ribosomal subunit protein bL33 (56 aa).

This sequence belongs to the bacterial ribosomal protein bL33 family.

The protein is Large ribosomal subunit protein bL33 of Aliarcobacter butzleri (strain RM4018) (Arcobacter butzleri).